Reading from the N-terminus, the 284-residue chain is Bifunctional protein FolD (284 aa).

NADP(+)-binding positions include 165 to 167, Ser-190, and Ile-231; that span reads GAS.

It belongs to the tetrahydrofolate dehydrogenase/cyclohydrolase family. Homodimer.

The enzyme catalyses (6R)-5,10-methylene-5,6,7,8-tetrahydrofolate + NADP(+) = (6R)-5,10-methenyltetrahydrofolate + NADPH. It catalyses the reaction (6R)-5,10-methenyltetrahydrofolate + H2O = (6R)-10-formyltetrahydrofolate + H(+). It functions in the pathway one-carbon metabolism; tetrahydrofolate interconversion. In terms of biological role, catalyzes the oxidation of 5,10-methylenetetrahydrofolate to 5,10-methenyltetrahydrofolate and then the hydrolysis of 5,10-methenyltetrahydrofolate to 10-formyltetrahydrofolate. The sequence is that of Bifunctional protein FolD from Polynucleobacter asymbioticus (strain DSM 18221 / CIP 109841 / QLW-P1DMWA-1) (Polynucleobacter necessarius subsp. asymbioticus).